A 454-amino-acid polypeptide reads, in one-letter code: Probable DNA primase large subunit (454 aa).

Positions 280, 359, 375, and 415 each coordinate [4Fe-4S] cluster.

It belongs to the eukaryotic-type primase large subunit family. As to quaternary structure, heterodimer of a small subunit and a large subunit. Requires [4Fe-4S] cluster as cofactor.

In terms of biological role, DNA primase is the polymerase that synthesizes small RNA primers for the Okazaki fragments made during discontinuous DNA replication. The polypeptide is Probable DNA primase large subunit (Arabidopsis thaliana (Mouse-ear cress)).